Consider the following 66-residue polypeptide: Large ribosomal subunit protein bL35 (66 aa).

Basic residues-rich tracts occupy residues Met1–His26 and Gln38–Ala48. The disordered stretch occupies residues Met1–Ala48.

Belongs to the bacterial ribosomal protein bL35 family.

This is Large ribosomal subunit protein bL35 from Halalkalibacterium halodurans (strain ATCC BAA-125 / DSM 18197 / FERM 7344 / JCM 9153 / C-125) (Bacillus halodurans).